The following is a 486-amino-acid chain: uncharacterized protein (486 aa).

9 LRR repeats span residues 18–39 (NLKK…KKLV), 43–59 (ELHI…NIPE), 60–81 (NIKS…TKLK), 82–103 (NITY…ILPH), 104–125 (SIEF…NNLV), 126–147 (NLKK…FPIS), 148–168 (IVEL…EKLI), 169–190 (NLKK…IKFP), and 198–219 (DYQS…IEYE).

This is an uncharacterized protein from Amsacta moorei entomopoxvirus (AmEPV).